The primary structure comprises 323 residues: Glyoxylate/hydroxypyruvate reductase HPR3 (323 aa).

NADP(+) contacts are provided by residues Leu160–Ile163, Ser182–Ser184, and Val238–Arg240. Catalysis depends on residues Arg240 and Glu269. Residue His287 is the Proton donor of the active site. His287 to Ala289 contacts NADP(+).

The protein belongs to the D-isomer specific 2-hydroxyacid dehydrogenase family. GyaR subfamily. As to quaternary structure, homodimer.

It carries out the reaction glycolate + NADP(+) = glyoxylate + NADPH + H(+). The enzyme catalyses (R)-glycerate + NADP(+) = 3-hydroxypyruvate + NADPH + H(+). Inhibited by oxalate. Catalyzes the NADPH-dependent reduction of glyoxylate and hydroxypyruvate (HP) into glycolate and glycerate. Mostly active in the presence of NADPH and glyoxylate. The protein is Glyoxylate/hydroxypyruvate reductase HPR3 (HPR3) of Arabidopsis thaliana (Mouse-ear cress).